The primary structure comprises 452 residues: Probable alpha-galactosidase B (452 aa).

A signal peptide spans 1–24 (MLHRATTTAAAAAAAALLLCPVQA). Residues Cys-47 and Cys-79 are joined by a disulfide bond. 2 N-linked (GlcNAc...) asparagine glycosylation sites follow: Asn-87 and Asn-138. The cysteines at positions 129 and 159 are disulfide-linked. Residue Asp-157 is the Nucleophile of the active site. Residue Asn-184 is glycosylated (N-linked (GlcNAc...) asparagine). Substrate is bound at residue 231 to 235 (DWGQA). Asp-253 acts as the Proton donor in catalysis. N-linked (GlcNAc...) asparagine glycosylation is found at Asn-292, Asn-391, Asn-409, and Asn-410.

The protein belongs to the glycosyl hydrolase 27 family.

It localises to the secreted. The catalysed reaction is Hydrolysis of terminal, non-reducing alpha-D-galactose residues in alpha-D-galactosides, including galactose oligosaccharides, galactomannans and galactolipids.. Its function is as follows. Hydrolyzes a variety of simple alpha-D-galactoside as well as more complex molecules such as oligosaccharides and polysaccharides. The sequence is that of Probable alpha-galactosidase B from Talaromyces emersonii (Thermophilic fungus).